A 672-amino-acid polypeptide reads, in one-letter code: Bifunctional polymyxin resistance protein ArnA (672 aa).

Residues 1–310 (MKAIVFAYHD…EMGMVPQAKL (310 aa)) form a formyltransferase ArnAFT region. Histidine 104 serves as the catalytic Proton donor; for formyltransferase activity. (6R)-10-formyltetrahydrofolate is bound by residues arginine 114 and 136 to 140 (VSRAD). The dehydrogenase ArnADH stretch occupies residues 320 to 672 (RRTRVLILGV…HADNVTDTQG (353 aa)). Residues aspartate 353 and 374–375 (DI) each bind NAD(+). Residues alanine 399, tyrosine 404, and 438-439 (TS) each bind UDP-alpha-D-glucuronate. Glutamate 440 (proton acceptor; for decarboxylase activity) is an active-site residue. UDP-alpha-D-glucuronate-binding positions include arginine 466, asparagine 498, 532–541 (KLVDGGAQKR), and tyrosine 619. Catalysis depends on arginine 625, which acts as the Proton donor; for decarboxylase activity.

It in the N-terminal section; belongs to the Fmt family. UDP-L-Ara4N formyltransferase subfamily. In the C-terminal section; belongs to the NAD(P)-dependent epimerase/dehydratase family. UDP-glucuronic acid decarboxylase subfamily. As to quaternary structure, homohexamer, formed by a dimer of trimers.

The enzyme catalyses UDP-alpha-D-glucuronate + NAD(+) = UDP-beta-L-threo-pentopyranos-4-ulose + CO2 + NADH. It carries out the reaction UDP-4-amino-4-deoxy-beta-L-arabinose + (6R)-10-formyltetrahydrofolate = UDP-4-deoxy-4-formamido-beta-L-arabinose + (6S)-5,6,7,8-tetrahydrofolate + H(+). It functions in the pathway nucleotide-sugar biosynthesis; UDP-4-deoxy-4-formamido-beta-L-arabinose biosynthesis; UDP-4-deoxy-4-formamido-beta-L-arabinose from UDP-alpha-D-glucuronate: step 1/3. The protein operates within nucleotide-sugar biosynthesis; UDP-4-deoxy-4-formamido-beta-L-arabinose biosynthesis; UDP-4-deoxy-4-formamido-beta-L-arabinose from UDP-alpha-D-glucuronate: step 3/3. Its pathway is bacterial outer membrane biogenesis; lipopolysaccharide biosynthesis. Bifunctional enzyme that catalyzes the oxidative decarboxylation of UDP-glucuronic acid (UDP-GlcUA) to UDP-4-keto-arabinose (UDP-Ara4O) and the addition of a formyl group to UDP-4-amino-4-deoxy-L-arabinose (UDP-L-Ara4N) to form UDP-L-4-formamido-arabinose (UDP-L-Ara4FN). The modified arabinose is attached to lipid A and is required for resistance to polymyxin and cationic antimicrobial peptides. The protein is Bifunctional polymyxin resistance protein ArnA of Pectobacterium carotovorum subsp. carotovorum (strain PC1).